Consider the following 639-residue polypeptide: E3 ubiquitin-protein ligase RNF12 (639 aa).

Disordered regions lie at residues 1 to 28 (MESA…RLDR), 67 to 403 (RLQQ…ESER), and 467 to 534 (NDTD…GGVT). A compositionally biased stretch (low complexity) spans 11 to 21 (STEQSESQRQS). Polar residues-rich tracts occupy residues 110–138 (SVRQ…NPNS) and 147–166 (INVN…QSSE). Over residues 213 to 228 (RSPDQRRTRARTDRSR) the composition is skewed to basic and acidic residues. The span at 244–253 (HSSSQTVDAS) shows a compositional bias: polar residues. The segment covering 269-286 (SSQMQNSSSSNETEGSSR) has biased composition (low complexity). Residues 290-302 (HITARQQALGTEG) show a composition bias toward polar residues. 2 stretches are compositionally biased toward low complexity: residues 303-327 (QSQS…SQST) and 335-348 (SRSS…DSSS). The segment covering 349-358 (NAETTGTGQR) has biased composition (polar residues). The segment covering 372 to 382 (RPGDYRQRDSI) has biased composition (basic and acidic residues). Residues 383 to 399 (ANRTRSRSQTPNNTVTY) show a composition bias toward polar residues. Pro residues-rich tracts occupy residues 473-482 (NPTPVSPPAA) and 493-506 (PEPP…PEPV). Residues 585–626 (CSVCITEYTEGNKLRKLPCSHEYHVHCIDRWLSENSTCPICR) form an RING-type; atypical zinc finger. The short motif at 636–639 (ESIV) is the PDZ-binding element.

The protein belongs to the RNF12 family. In terms of assembly, forms homodimers through the C-terminal region. The N-terminus interacts with the homeobox of LIM/homeobox factor lhx1/lim1, with lhx3/lim3 and lhx5/lim5, and with the N-terminus of ldb1.

The protein localises to the nucleus. The catalysed reaction is S-ubiquitinyl-[E2 ubiquitin-conjugating enzyme]-L-cysteine + [acceptor protein]-L-lysine = [E2 ubiquitin-conjugating enzyme]-L-cysteine + N(6)-ubiquitinyl-[acceptor protein]-L-lysine.. Its pathway is protein modification; protein ubiquitination. Acts as an E3 ubiquitin-protein ligase specific for ldb1, mediating ubiquitination and proteasome-dependent degradation of excess ldb1 in a RING-dependent manner. Does not degrade ldb1 bound to lhx1/lim1, nor lim1 itself and thus contributes to the establishment of proper ldb1-lhx1/lim1 stoichiometry and the formation of a ldb1-lhx1/lim1 complex. Interferes with Spemann organizer function and suppresses secondary axis formation induced by ldb1 and lhx1/lim1. The sequence is that of E3 ubiquitin-protein ligase RNF12 from Xenopus tropicalis (Western clawed frog).